A 449-amino-acid chain; its full sequence is Cysteine--tRNA ligase (449 aa).

C29 contacts Zn(2+). A 'HIGH' region motif is present at residues 31–41 (PTVYDHLHIGN). C211, H236, and E240 together coordinate Zn(2+). The 'KMSKS' region motif lies at 269 to 273 (KMSKS). Position 272 (K272) interacts with ATP.

It belongs to the class-I aminoacyl-tRNA synthetase family. As to quaternary structure, monomer. Requires Zn(2+) as cofactor.

The protein resides in the cytoplasm. The catalysed reaction is tRNA(Cys) + L-cysteine + ATP = L-cysteinyl-tRNA(Cys) + AMP + diphosphate. In Methylocella silvestris (strain DSM 15510 / CIP 108128 / LMG 27833 / NCIMB 13906 / BL2), this protein is Cysteine--tRNA ligase.